The chain runs to 187 residues: Ribonuclease M5 (187 aa).

The region spanning 5–88 (KEVIVVEGKD…AFLPRKAGVP (84 aa)) is the Toprim domain. Glu11, Asp57, and Asp59 together coordinate Mg(2+).

This sequence belongs to the ribonuclease M5 family. Mg(2+) is required as a cofactor.

It localises to the cytoplasm. It carries out the reaction Endonucleolytic cleavage of RNA, removing 21 and 42 nucleotides, respectively, from the 5'- and 3'-termini of a 5S-rRNA precursor.. Functionally, required for correct processing of both the 5' and 3' ends of 5S rRNA precursor. Cleaves both sides of a double-stranded region yielding mature 5S rRNA in one step. This chain is Ribonuclease M5, found in Lactiplantibacillus plantarum (strain ATCC BAA-793 / NCIMB 8826 / WCFS1) (Lactobacillus plantarum).